Reading from the N-terminus, the 234-residue chain is UPF0173 metal-dependent hydrolase Atu1317 (234 aa).

This sequence belongs to the UPF0173 family.

The protein is UPF0173 metal-dependent hydrolase Atu1317 of Agrobacterium fabrum (strain C58 / ATCC 33970) (Agrobacterium tumefaciens (strain C58)).